The primary structure comprises 266 residues: Thymidylate synthase (266 aa).

Position 24 (Arg-24) interacts with dUMP. His-54 serves as a coordination point for (6R)-5,10-methylene-5,6,7,8-tetrahydrofolate. Residue 129–130 (RR) coordinates dUMP. Residue Cys-149 is the Nucleophile of the active site. DUMP-binding positions include 169–172 (RSAD), Asn-180, and 210–212 (HIY). Asp-172 provides a ligand contact to (6R)-5,10-methylene-5,6,7,8-tetrahydrofolate. Residue Ala-265 coordinates (6R)-5,10-methylene-5,6,7,8-tetrahydrofolate.

Belongs to the thymidylate synthase family. Bacterial-type ThyA subfamily. As to quaternary structure, homodimer.

It is found in the cytoplasm. The enzyme catalyses dUMP + (6R)-5,10-methylene-5,6,7,8-tetrahydrofolate = 7,8-dihydrofolate + dTMP. The protein operates within pyrimidine metabolism; dTTP biosynthesis. Functionally, catalyzes the reductive methylation of 2'-deoxyuridine-5'-monophosphate (dUMP) to 2'-deoxythymidine-5'-monophosphate (dTMP) while utilizing 5,10-methylenetetrahydrofolate (mTHF) as the methyl donor and reductant in the reaction, yielding dihydrofolate (DHF) as a by-product. This enzymatic reaction provides an intracellular de novo source of dTMP, an essential precursor for DNA biosynthesis. In Mycolicibacterium paratuberculosis (strain ATCC BAA-968 / K-10) (Mycobacterium paratuberculosis), this protein is Thymidylate synthase.